We begin with the raw amino-acid sequence, 151 residues long: Deoxyuridine 5'-triphosphate nucleotidohydrolase (151 aa).

Substrate-binding positions include 70–72 (RSG), Asn83, and 87–89 (LID).

Belongs to the dUTPase family. The cofactor is Mg(2+).

The enzyme catalyses dUTP + H2O = dUMP + diphosphate + H(+). The protein operates within pyrimidine metabolism; dUMP biosynthesis; dUMP from dCTP (dUTP route): step 2/2. This enzyme is involved in nucleotide metabolism: it produces dUMP, the immediate precursor of thymidine nucleotides and it decreases the intracellular concentration of dUTP so that uracil cannot be incorporated into DNA. This chain is Deoxyuridine 5'-triphosphate nucleotidohydrolase, found in Methylococcus capsulatus (strain ATCC 33009 / NCIMB 11132 / Bath).